The primary structure comprises 206 residues: Large ribosomal subunit protein uL4 (206 aa).

The protein belongs to the universal ribosomal protein uL4 family. As to quaternary structure, part of the 50S ribosomal subunit.

Its function is as follows. One of the primary rRNA binding proteins, this protein initially binds near the 5'-end of the 23S rRNA. It is important during the early stages of 50S assembly. It makes multiple contacts with different domains of the 23S rRNA in the assembled 50S subunit and ribosome. Functionally, forms part of the polypeptide exit tunnel. The chain is Large ribosomal subunit protein uL4 from Cereibacter sphaeroides (strain ATCC 17025 / ATH 2.4.3) (Rhodobacter sphaeroides).